Reading from the N-terminus, the 912-residue chain is Lateral signaling target protein 2 homolog (912 aa).

Low complexity predominate over residues 323 to 332; it reads NVNTSNNSDN. Disordered stretches follow at residues 323–360, 455–610, 664–745, and 769–846; these read NVNT…SSFY, ADSG…ESSQ, NSSP…ASSA, and GGGS…APPR. Basic and acidic residues predominate over residues 333–355; sequence SDSRVDDSPNDELRHESETRDNR. Positions 455–468 are enriched in polar residues; the sequence is ADSGLGTANPSVDN. The span at 486-505 shows a compositional bias: acidic residues; that stretch reads SSEEGEIDEYDNEEDDEDSD. Basic residues predominate over residues 530 to 544; the sequence is YRTHKQQHHHRHRRS. Composition is skewed to polar residues over residues 545–556 and 572–590; these read SGSIMSATSSRK and VPSN…DTSP. Positions 591–610 are enriched in low complexity; the sequence is SSGNQSECSSTSSTTGESSQ. Basic and acidic residues predominate over residues 682–699; it reads DKPKEPDPTDLFEFRASE. Polar residues-rich tracts occupy residues 705–717, 735–745, 780–801, and 822–834; these read PGQN…QSIY, PGTSPIRASSA, ERSV…ATDS, and SRSS…NGTS. Residues 850–910 form an FYVE-type zinc finger; the sequence is DGDAPRCMAC…VCRDCYVREV (61 aa). Residues Cys856, Cys859, Cys872, Cys875, Cys880, Cys883, Cys902, and Cys905 each coordinate Zn(2+).

Belongs to the lst-2 family.

Negative regulator of epidermal growth factor receptor (EGFR) signaling. The protein is Lateral signaling target protein 2 homolog of Aedes aegypti (Yellowfever mosquito).